The primary structure comprises 491 residues: Probable succinate-semialdehyde dehydrogenase [NADP(+)] (491 aa).

Residues 163–164 (WN), 187–190 (KPAE), and 241–242 (GS) each bind NADP(+). E263 functions as the Proton acceptor in the catalytic mechanism. L264 lines the NADP(+) pocket. The active-site Nucleophile is C297. An NADP(+)-binding site is contributed by E394.

This sequence belongs to the aldehyde dehydrogenase family.

The catalysed reaction is succinate semialdehyde + NADP(+) + H2O = succinate + NADPH + 2 H(+). It participates in amino-acid degradation; 4-aminobutanoate degradation. Its function is as follows. Catalyzes the NADP(+) dependent oxidation of succinate semialdehyde to succinate. The protein is Probable succinate-semialdehyde dehydrogenase [NADP(+)] (gabD) of Sinorhizobium fredii (strain NBRC 101917 / NGR234).